The following is a 299-amino-acid chain: UPF0276 protein ABO_1518 (299 aa).

It belongs to the UPF0276 family.

The sequence is that of UPF0276 protein ABO_1518 from Alcanivorax borkumensis (strain ATCC 700651 / DSM 11573 / NCIMB 13689 / SK2).